We begin with the raw amino-acid sequence, 186 residues long: ATP synthase subunit b (186 aa).

The helical transmembrane segment at 28–48 (IVWSIIPFAVILFVFAKVVLP) threads the bilayer.

The protein belongs to the ATPase B chain family. F-type ATPases have 2 components, F(1) - the catalytic core - and F(0) - the membrane proton channel. F(1) has five subunits: alpha(3), beta(3), gamma(1), delta(1), epsilon(1). F(0) has three main subunits: a(1), b(2) and c(10-14). The alpha and beta chains form an alternating ring which encloses part of the gamma chain. F(1) is attached to F(0) by a central stalk formed by the gamma and epsilon chains, while a peripheral stalk is formed by the delta and b chains.

It localises to the cell membrane. Its function is as follows. F(1)F(0) ATP synthase produces ATP from ADP in the presence of a proton or sodium gradient. F-type ATPases consist of two structural domains, F(1) containing the extramembraneous catalytic core and F(0) containing the membrane proton channel, linked together by a central stalk and a peripheral stalk. During catalysis, ATP synthesis in the catalytic domain of F(1) is coupled via a rotary mechanism of the central stalk subunits to proton translocation. In terms of biological role, component of the F(0) channel, it forms part of the peripheral stalk, linking F(1) to F(0). This chain is ATP synthase subunit b, found in Corynebacterium urealyticum (strain ATCC 43042 / DSM 7109).